The primary structure comprises 117 residues: Large ribosomal subunit protein uL18 (117 aa).

This sequence belongs to the universal ribosomal protein uL18 family. As to quaternary structure, part of the 50S ribosomal subunit; part of the 5S rRNA/L5/L18/L25 subcomplex. Contacts the 5S and 23S rRNAs.

In terms of biological role, this is one of the proteins that bind and probably mediate the attachment of the 5S RNA into the large ribosomal subunit, where it forms part of the central protuberance. This Polynucleobacter asymbioticus (strain DSM 18221 / CIP 109841 / QLW-P1DMWA-1) (Polynucleobacter necessarius subsp. asymbioticus) protein is Large ribosomal subunit protein uL18.